Reading from the N-terminus, the 136-residue chain is Large ribosomal subunit protein uL16 (136 aa).

It belongs to the universal ribosomal protein uL16 family. In terms of assembly, part of the 50S ribosomal subunit.

Its function is as follows. Binds 23S rRNA and is also seen to make contacts with the A and possibly P site tRNAs. The sequence is that of Large ribosomal subunit protein uL16 from Buchnera aphidicola subsp. Cinara cedri (strain Cc).